The chain runs to 396 residues: GTPase Obg (396 aa).

Residues 1–159 (MKFVDEASIY…RTLKLEMKVL (159 aa)) enclose the Obg domain. The disordered stretch occupies residues 120–146 (GGHHGLGNTRFKSSTNRAPRQTTKGTV). Over residues 129-144 (RFKSSTNRAPRQTTKG) the composition is skewed to polar residues. The 174-residue stretch at 160-333 (ADVGLLGLPN…LCLDLMTALD (174 aa)) folds into the OBG-type G domain. GTP-binding positions include 166 to 173 (GLPNAGKS), 191 to 195 (FTTLV), 213 to 216 (DIPG), 283 to 286 (NKTD), and 314 to 316 (SAI). Mg(2+) is bound by residues serine 173 and threonine 193.

This sequence belongs to the TRAFAC class OBG-HflX-like GTPase superfamily. OBG GTPase family. In terms of assembly, monomer. Requires Mg(2+) as cofactor.

The protein resides in the cytoplasm. An essential GTPase which binds GTP, GDP and possibly (p)ppGpp with moderate affinity, with high nucleotide exchange rates and a fairly low GTP hydrolysis rate. Plays a role in control of the cell cycle, stress response, ribosome biogenesis and in those bacteria that undergo differentiation, in morphogenesis control. The sequence is that of GTPase Obg from Marinomonas sp. (strain MWYL1).